A 1034-amino-acid chain; its full sequence is Translation initiation factor IF-2 (1034 aa).

Disordered regions lie at residues 118–140 and 154–446; these read AAEA…QSVE and EAEA…NESA. 2 stretches are compositionally biased toward low complexity: residues 162-178 and 212-228; these read TPPV…AAAP and PAVK…PAAS. Residues 304–315 show a composition bias toward basic and acidic residues; the sequence is DRAREDARRAAE. In terms of domain architecture, tr-type G spans 535–702; it reads PRAPVVTVMG…NVLLQAEILE (168 aa). A G1 region spans residues 544–551; the sequence is GHVDHGKT. 544 to 551 is a GTP binding site; the sequence is GHVDHGKT. A G2 region spans residues 569–573; the sequence is GITQH. The segment at 590-593 is G3; sequence DTPG. GTP is bound by residues 590-594 and 644-647; these read DTPGH and NKID. Residues 644-647 are G4; that stretch reads NKID. A G5 region spans residues 680–682; sequence SAK.

Belongs to the TRAFAC class translation factor GTPase superfamily. Classic translation factor GTPase family. IF-2 subfamily.

The protein resides in the cytoplasm. Its function is as follows. One of the essential components for the initiation of protein synthesis. Protects formylmethionyl-tRNA from spontaneous hydrolysis and promotes its binding to the 30S ribosomal subunits. Also involved in the hydrolysis of GTP during the formation of the 70S ribosomal complex. The chain is Translation initiation factor IF-2 from Bordetella avium (strain 197N).